Here is a 202-residue protein sequence, read N- to C-terminus: Glycerol-3-phosphate acyltransferase (202 aa).

6 helical membrane passes run 2-22 (MIIV…GFVI), 54-74 (FLVT…PLWL), 85-105 (FFTN…YPVY), 120-140 (VVLG…FIVL), 141-161 (KIFK…VIGS), and 162-182 (LIIQ…ILII).

This sequence belongs to the PlsY family. Probably interacts with PlsX.

It is found in the cell membrane. The catalysed reaction is an acyl phosphate + sn-glycerol 3-phosphate = a 1-acyl-sn-glycero-3-phosphate + phosphate. The protein operates within lipid metabolism; phospholipid metabolism. Its function is as follows. Catalyzes the transfer of an acyl group from acyl-phosphate (acyl-PO(4)) to glycerol-3-phosphate (G3P) to form lysophosphatidic acid (LPA). This enzyme utilizes acyl-phosphate as fatty acyl donor, but not acyl-CoA or acyl-ACP. In Staphylococcus aureus (strain USA300), this protein is Glycerol-3-phosphate acyltransferase.